The chain runs to 122 residues: Large ribosomal subunit protein uL14 (122 aa).

It belongs to the universal ribosomal protein uL14 family. As to quaternary structure, part of the 50S ribosomal subunit. Forms a cluster with proteins L3 and L19. In the 70S ribosome, L14 and L19 interact and together make contacts with the 16S rRNA in bridges B5 and B8.

Functionally, binds to 23S rRNA. Forms part of two intersubunit bridges in the 70S ribosome. The protein is Large ribosomal subunit protein uL14 of Caulobacter sp. (strain K31).